Here is a 462-residue protein sequence, read N- to C-terminus: Fumarate hydratase class II (462 aa).

Substrate is bound by residues 97–99 (SGT), 128–131 (HPND), 138–140 (STN), and Thr186. The active-site Proton donor/acceptor is the His187. Residue Ser317 is part of the active site. Residues Ser318 and 323-325 (KVN) each bind substrate.

This sequence belongs to the class-II fumarase/aspartase family. Fumarase subfamily. In terms of assembly, homotetramer.

It is found in the cytoplasm. The catalysed reaction is (S)-malate = fumarate + H2O. The protein operates within carbohydrate metabolism; tricarboxylic acid cycle; (S)-malate from fumarate: step 1/1. Involved in the TCA cycle. Catalyzes the stereospecific interconversion of fumarate to L-malate. The chain is Fumarate hydratase class II from Neisseria meningitidis serogroup A / serotype 4A (strain DSM 15465 / Z2491).